The chain runs to 279 residues: Large ribosomal subunit protein uL2 (279 aa).

Disordered stretches follow at residues 34–58 (LRPL…GGGH) and 225–279 (VMNP…KNKR). Positions 251–268 (GKPEGRTRRPNKESDKLI) are enriched in basic and acidic residues. The span at 269–279 (VRRRRTGKNKR) shows a compositional bias: basic residues.

This sequence belongs to the universal ribosomal protein uL2 family. As to quaternary structure, part of the 50S ribosomal subunit. Forms a bridge to the 30S subunit in the 70S ribosome.

Functionally, one of the primary rRNA binding proteins. Required for association of the 30S and 50S subunits to form the 70S ribosome, for tRNA binding and peptide bond formation. It has been suggested to have peptidyltransferase activity; this is somewhat controversial. Makes several contacts with the 16S rRNA in the 70S ribosome. The polypeptide is Large ribosomal subunit protein uL2 (Micrococcus luteus (strain ATCC 4698 / DSM 20030 / JCM 1464 / CCM 169 / CCUG 5858 / IAM 1056 / NBRC 3333 / NCIMB 9278 / NCTC 2665 / VKM Ac-2230) (Micrococcus lysodeikticus)).